The sequence spans 2052 residues: Genome polyprotein (2052 aa).

2 short sequence motifs ((L)YPX(n)L motif) span residues 167–171 (YPHGL) and 200–205 (YPVWEL). A disordered region spans residues 502 to 522 (TVSTEQNVPDPQVGIKGKANR). Positions 760-830 (MMSRIAAGDL…PRKMKGLFSQ (71 aa)) are involved in P1-2A pentamerization. The chain crosses the membrane as a helical span at residues 1005–1025 (TVEIINIVLCFIKSGILLYVI). The segment at 1037–1064 (IGLLRVMNYADIGCSVISCGKVFSKMLE) is membrane-penetrating ability. The stretch at 1121-1146 (KKKDVLNILKDNQQKIEKAIEEADNF) forms a coiled coil. A helical transmembrane segment spans residues 1296–1316 (WVAVGAAVGILGLLVGGWFVY). Residue Tyr-1333 is modified to O-(5'-phospho-RNA)-tyrosine. Residues 1348-1562 (DPVESQSTLE…VAKLITQEMF (215 aa)) enclose the Peptidase C3 domain. Active-site for protease 3C activity residues include His-1397, Asp-1437, and Cys-1525. Residues 1810–1931 (DVGLDLDFSA…VFSRDVQIDN (122 aa)) form the RdRp catalytic domain.

This sequence belongs to the picornaviridae polyprotein family. Homodimer. Homomultimer; probably interacts with membranes in a multimeric form. Seems to assemble into amyloid-like fibers. In terms of assembly, homodimer. Monomer. Interacts with protein 3CD. As to quaternary structure, interacts with host ACBD3. Interacts with protein 3AB. In terms of assembly, interacts with human MAVS. As to quaternary structure, homodimer; disulfide-linked. Homopentamer. Homooligomer. In terms of assembly, interacts with capsid protein VP2. Interacts with capsid protein VP3. As to quaternary structure, interacts with capsid protein VP1. Interacts with capsid protein VP3. Interacts with capsid protein VP1. Interacts with capsid protein VP2. In terms of processing, specific enzymatic cleavages by viral protease in vivo yield a variety of precursors and mature proteins. Polyprotein processing intermediates are produced, such as P1-2A which is a functional precursor of the structural proteins, VP0 which is a VP4-VP2 precursor, VP1-2A precursor, 3ABC precursor which is a stable and catalytically active precursor of 3A, 3B and 3C proteins, 3AB and 3CD precursors. The assembly signal 2A is removed from VP1-2A by a host protease, possibly host Cathepsin L. This cleavage occurs over a region of 3 amino-acids probably generating VP1 proteins with heterogeneous C-termini. During virion maturation, immature virions are rendered infectious following cleavage of VP0 into VP4 and VP2. This maturation seems to be an autocatalytic event triggered by the presence of RNA in the capsid and is followed by a conformational change of the particle. Post-translationally, the assembly signal 2A is removed from VP1-2A by a host protease, possibly host Cathepsin L in naked virions. This cleavage does not occur in enveloped virions. This cleavage occurs over a region of 3 amino-acids probably generating VP1 proteins with heterogeneous C-termini. In terms of processing, VPg is uridylylated prior to priming replication into VPg-pUpU. Unlike other picornaviruses, does not seem to be myristoylated.

It localises to the virion. Its subcellular location is the host endosome. The protein localises to the host multivesicular body. The protein resides in the host membrane. It is found in the host mitochondrion outer membrane. It localises to the host cytoplasm. Its subcellular location is the host cytoplasmic vesicle membrane. It carries out the reaction RNA(n) + a ribonucleoside 5'-triphosphate = RNA(n+1) + diphosphate. The catalysed reaction is a ribonucleoside 5'-triphosphate + H2O = a ribonucleoside 5'-diphosphate + phosphate + H(+). It catalyses the reaction Selective cleavage of Gln-|-Gly bond in the poliovirus polyprotein. In other picornavirus reactions Glu may be substituted for Gln, and Ser or Thr for Gly.. Capsid proteins VP1, VP2, and VP3 form a closed capsid enclosing the viral positive strand RNA genome. All these proteins contain a beta-sheet structure called beta-barrel jelly roll. Together they form an icosahedral capsid (T=3) composed of 60 copies of each VP1, VP2, and VP3, with a diameter of approximately 300 Angstroms. VP1 is situated at the 12 fivefold axes, whereas VP2 and VP3 are located at the quasi-sixfold axes. The naked capsid interacts with the host receptor HAVCR1 to provide virion attachment to and probably entry into the target cell. Functionally, VP0 precursor is a component of the immature procapsids. In terms of biological role, plays a role in the assembly of the 12 pentamers into an icosahedral structure. Has not been detected in mature virions, supposedly owing to its small size. Its function is as follows. Precursor component of immature procapsids that corresponds to an extended form of the structural protein VP1. After maturation, possibly by the host Cathepsin L, the assembly signal 2A is cleaved to give rise to the mature VP1 protein. Functions as a viroporin. Affects membrane integrity and causes an increase in membrane permeability. Involved in host intracellular membrane rearrangements probably to give rise to the viral factories. Does not disrupt calcium homeostasis or glycoprotein trafficking. Antagonizes the innate immune response of the host by suppressing IFN-beta synthesis, which it achieves by interfering with the RIG-I/IFIH1 pathway. Functionally, affects membrane integrity and causes an increase in membrane permeability. In terms of biological role, associates with and induces structural rearrangements of intracellular membranes. Displays RNA-binding activity. Its function is as follows. The precursor 3ABC is targeted to the mitochondrial membrane where protease 3C activity cleaves and inhibits the host antiviral protein MAVS, thereby disrupting activation of IRF3 through the IFIH1/MDA5 pathway. In vivo, the protease activity of 3ABC precursor is more efficient in cleaving the 2BC precursor than that of protein 3C. The 3ABC precursor may therefore play a role in the proteolytic processing of the polyprotein. Possible viroporin. Interacts with the 3CD precursor and with RNA structures found at both the 5'- and 3'-termini of the viral genome. Since the 3AB precursor contains the hydrophobic domain 3A, it probably anchors the whole viral replicase complex to intracellular membranes on which viral RNA synthesis occurs. Functionally, may serve as membrane anchor to the 3AB and 3ABC precursors via its hydrophobic domain. May interact with RNA. In terms of biological role, acts as a primer for viral RNA replication and remains covalently bound to viral genomic RNA. VPg is uridylylated prior to priming replication into VPg-pUpU. The VPg-pUpU is then used as primer on the genomic RNA poly(A) by the RNA-dependent RNA polymerase to replicate the viral genome. Its function is as follows. Cysteine protease that generates mature viral proteins from the precursor polyprotein. In addition to its proteolytic activity, it binds to viral RNA, and thus influences viral genome replication. RNA and substrate bind cooperatively to the protease. Cleaves IKBKG/NEMO to impair innate immune signaling. Cleaves host PABPC1 which may participate in the switch of viral translation to RNA synthesis. Interacts with the 3AB precursor and with RNA structures found at both the 5'- and 3'-termini of the viral genome. Disrupts TLR3 signaling by degrading the host adapter protein TICAM1/TRIF. Functionally, RNA-directed RNA polymerase 3D-POL replicates genomic and antigenomic RNA by recognizing replications specific signals. The protein is Genome polyprotein of Homo sapiens (Human).